Reading from the N-terminus, the 1229-residue chain is Receptor-type adenylate cyclase GRESAG 4.3 (1229 aa).

Topologically, residues 1-24 (MIARVCRLTKHSKPPHLPITLTTP) are cytoplasmic. Residues 25–45 (TLFLVVLVLLQLHPICVLVNV) traverse the membrane as a helical segment. Over 46 to 845 (DDGGGVTVKA…PNGNALTPAQ (800 aa)) the chain is Extracellular. Residues asparagine 77, asparagine 84, asparagine 626, asparagine 693, and asparagine 768 are each glycosylated (N-linked (GlcNAc...) asparagine). Residues 846–866 (LAGVVGGSLFVVALAICLSVL) form a helical membrane-spanning segment. Residues 867–1229 (ACFTLRGTRD…SNDLSDMIRV (363 aa)) lie on the Cytoplasmic side of the membrane. The region spanning 889-1043 (TLIFTDIESS…RTSNMAARTE (155 aa)) is the Guanylate cyclase domain. Residues aspartate 894 and aspartate 937 each coordinate Mg(2+).

It belongs to the adenylyl cyclase class-3 family. Mg(2+) is required as a cofactor.

The protein resides in the membrane. The enzyme catalyses ATP = 3',5'-cyclic AMP + diphosphate. In terms of biological role, could act as a receptor for an unknown ligand. This chain is Receptor-type adenylate cyclase GRESAG 4.3 (GRESAG 4.3), found in Trypanosoma brucei brucei.